The sequence spans 862 residues: Aldehyde-alcohol dehydrogenase (862 aa).

C244 is an active-site residue. G420–N425 is a binding site for NAD(+).

The protein in the N-terminal section; belongs to the aldehyde dehydrogenase family. It in the C-terminal section; belongs to the iron-containing alcohol dehydrogenase family.

The enzyme catalyses a primary alcohol + NAD(+) = an aldehyde + NADH + H(+). It catalyses the reaction a secondary alcohol + NAD(+) = a ketone + NADH + H(+). It carries out the reaction an aldehyde + NAD(+) + H2O = a carboxylate + NADH + 2 H(+). Its function is as follows. Has both aldehyde and alcohol dehydrogenase activities. Can use acetaldehyde, butyraldehyde, butanol and ethanol. This chain is Aldehyde-alcohol dehydrogenase, found in Clostridium acetobutylicum (strain ATCC 824 / DSM 792 / JCM 1419 / IAM 19013 / LMG 5710 / NBRC 13948 / NRRL B-527 / VKM B-1787 / 2291 / W).